We begin with the raw amino-acid sequence, 178 residues long: Large ribosomal subunit protein uL6 (178 aa).

This sequence belongs to the universal ribosomal protein uL6 family. In terms of assembly, part of the 50S ribosomal subunit.

In terms of biological role, this protein binds to the 23S rRNA, and is important in its secondary structure. It is located near the subunit interface in the base of the L7/L12 stalk, and near the tRNA binding site of the peptidyltransferase center. The protein is Large ribosomal subunit protein uL6 of Lactiplantibacillus plantarum (strain ATCC BAA-793 / NCIMB 8826 / WCFS1) (Lactobacillus plantarum).